We begin with the raw amino-acid sequence, 393 residues long: Pectate lyase A (393 aa).

The signal sequence occupies residues 1–32 (MMNKASGRSFTRSSKYLLATLIAGMMASGVSA). Residues Glu-174, Asp-176, Asp-216, and Asp-220 each contribute to the Ca(2+) site. Residue Arg-273 is part of the active site. Cys-330 and Cys-358 are joined by a disulfide.

This sequence belongs to the polysaccharide lyase 1 family. PLADES subfamily. Requires Ca(2+) as cofactor.

It is found in the secreted. It catalyses the reaction Eliminative cleavage of (1-&gt;4)-alpha-D-galacturonan to give oligosaccharides with 4-deoxy-alpha-D-galact-4-enuronosyl groups at their non-reducing ends.. Its pathway is glycan metabolism; pectin degradation; 2-dehydro-3-deoxy-D-gluconate from pectin: step 2/5. Involved in maceration and soft-rotting of plant tissue. The polypeptide is Pectate lyase A (pelA) (Dickeya chrysanthemi (Pectobacterium chrysanthemi)).